A 90-amino-acid chain; its full sequence is MSQKSYLFNVKGKVQRVGFRFHTAHNALKLGLTGYARNQEDGSVEVLVCGSKDKINQFLEWLQVGPQLARVDSIKQEETQWQELTDFKMY.

An Acylphosphatase-like domain is found at 5–90 (SYLFNVKGKV…WQELTDFKMY (86 aa)). Active-site residues include R20 and N38.

Belongs to the acylphosphatase family.

It catalyses the reaction an acyl phosphate + H2O = a carboxylate + phosphate + H(+). The sequence is that of Acylphosphatase (acyP) from Aliivibrio fischeri (strain ATCC 700601 / ES114) (Vibrio fischeri).